We begin with the raw amino-acid sequence, 249 residues long: MKKSIIIPALDLIDGNVVRLHQGDYAKQTTYSDNPIEQFASYLAQGAEQLHLVDLTGAKDPAKRQTALIGKIIAATHCKIQVGGGIRTEKDVADLLAVGANRVVIGSTAVKERAMVKEWFNKYGAEKFVLALDVNIDASGQKIIAISGWQEASGVSLEELIEDFQSVGLQHVLCTDISRDGTLAGSNVDLYKEICAKYPAVNFQSSGGIGSLEDIKALKGTGVAGVIVGRALLEGKFNVAEAIECWQNG.

Residue D11 is the Proton acceptor of the active site. D133 acts as the Proton donor in catalysis.

Belongs to the HisA/HisF family.

Its subcellular location is the cytoplasm. The catalysed reaction is 1-(5-phospho-beta-D-ribosyl)-5-[(5-phospho-beta-D-ribosylamino)methylideneamino]imidazole-4-carboxamide = 5-[(5-phospho-1-deoxy-D-ribulos-1-ylimino)methylamino]-1-(5-phospho-beta-D-ribosyl)imidazole-4-carboxamide. It functions in the pathway amino-acid biosynthesis; L-histidine biosynthesis; L-histidine from 5-phospho-alpha-D-ribose 1-diphosphate: step 4/9. The protein is 1-(5-phosphoribosyl)-5-[(5-phosphoribosylamino)methylideneamino] imidazole-4-carboxamide isomerase of Mannheimia succiniciproducens (strain KCTC 0769BP / MBEL55E).